Here is a 419-residue protein sequence, read N- to C-terminus: UDP-N-acetylglucosamine 1-carboxyvinyltransferase (419 aa).

22–23 is a binding site for phosphoenolpyruvate; it reads KN. Arg91 is a UDP-N-acetyl-alpha-D-glucosamine binding site. The active-site Proton donor is Cys115. 2-(S-cysteinyl)pyruvic acid O-phosphothioketal is present on Cys115. UDP-N-acetyl-alpha-D-glucosamine is bound by residues 120 to 124, 160 to 163, Asp305, and Ile327; these read RPVDL and KVSV.

The protein belongs to the EPSP synthase family. MurA subfamily.

The protein resides in the cytoplasm. The catalysed reaction is phosphoenolpyruvate + UDP-N-acetyl-alpha-D-glucosamine = UDP-N-acetyl-3-O-(1-carboxyvinyl)-alpha-D-glucosamine + phosphate. It functions in the pathway cell wall biogenesis; peptidoglycan biosynthesis. In terms of biological role, cell wall formation. Adds enolpyruvyl to UDP-N-acetylglucosamine. The chain is UDP-N-acetylglucosamine 1-carboxyvinyltransferase from Citrobacter koseri (strain ATCC BAA-895 / CDC 4225-83 / SGSC4696).